A 339-amino-acid chain; its full sequence is RNA 3'-terminal phosphate cyclase (339 aa).

ATP is bound by residues Gln103 and 283 to 287 (HLADQ). The Tele-AMP-histidine intermediate role is filled by His308.

Belongs to the RNA 3'-terminal cyclase family. Type 1 subfamily.

Its subcellular location is the cytoplasm. The catalysed reaction is a 3'-end 3'-phospho-ribonucleotide-RNA + ATP = a 3'-end 2',3'-cyclophospho-ribonucleotide-RNA + AMP + diphosphate. Catalyzes the conversion of 3'-phosphate to a 2',3'-cyclic phosphodiester at the end of RNA. The mechanism of action of the enzyme occurs in 3 steps: (A) adenylation of the enzyme by ATP; (B) transfer of adenylate to an RNA-N3'P to produce RNA-N3'PP5'A; (C) and attack of the adjacent 2'-hydroxyl on the 3'-phosphorus in the diester linkage to produce the cyclic end product. The biological role of this enzyme is unknown but it is likely to function in some aspects of cellular RNA processing. This is RNA 3'-terminal phosphate cyclase from Salmonella enteritidis PT4 (strain P125109).